A 185-amino-acid chain; its full sequence is Pyruvate/ketoisovalerate oxidoreductases common subunit gamma (185 aa).

As to quaternary structure, heterotetramer of one alpha, one beta, one delta and one gamma chain.

The catalysed reaction is 2 oxidized [2Fe-2S]-[ferredoxin] + pyruvate + CoA = 2 reduced [2Fe-2S]-[ferredoxin] + acetyl-CoA + CO2 + H(+). The enzyme catalyses 3-methyl-2-oxobutanoate + 2 oxidized [2Fe-2S]-[ferredoxin] + CoA = 2-methylpropanoyl-CoA + 2 reduced [2Fe-2S]-[ferredoxin] + CO2 + H(+). This chain is Pyruvate/ketoisovalerate oxidoreductases common subunit gamma (porG), found in Pyrococcus furiosus (strain ATCC 43587 / DSM 3638 / JCM 8422 / Vc1).